Here is a 120-residue protein sequence, read N- to C-terminus: Small ribosomal subunit protein uS13 (120 aa).

The disordered stretch occupies residues 93–120 (RKGLPVRGQTTKNNARTRKGKKKTVGSK). Over residues 107–120 (ARTRKGKKKTVGSK) the composition is skewed to basic residues.

Belongs to the universal ribosomal protein uS13 family. In terms of assembly, part of the 30S ribosomal subunit. Forms a loose heterodimer with protein S19. Forms two bridges to the 50S subunit in the 70S ribosome.

Functionally, located at the top of the head of the 30S subunit, it contacts several helices of the 16S rRNA. In the 70S ribosome it contacts the 23S rRNA (bridge B1a) and protein L5 of the 50S subunit (bridge B1b), connecting the 2 subunits; these bridges are implicated in subunit movement. Contacts the tRNAs in the A and P-sites. The polypeptide is Small ribosomal subunit protein uS13 (Helicobacter pylori (strain P12)).